The sequence spans 253 residues: Geranylgeranylglyceryl phosphate synthase (253 aa).

2 residues coordinate Mg(2+): Asp28 and Ser53. Sn-glycerol 1-phosphate is bound by residues 172–178, 203–204, and 225–226; these read YLEAGSG, GG, and GN.

The protein belongs to the GGGP/HepGP synthase family. Group II subfamily. It depends on Mg(2+) as a cofactor.

The protein resides in the cytoplasm. It catalyses the reaction sn-glycerol 1-phosphate + (2E,6E,10E)-geranylgeranyl diphosphate = sn-3-O-(geranylgeranyl)glycerol 1-phosphate + diphosphate. The protein operates within membrane lipid metabolism; glycerophospholipid metabolism. Prenyltransferase that catalyzes the transfer of the geranylgeranyl moiety of geranylgeranyl diphosphate (GGPP) to the C3 hydroxyl of sn-glycerol-1-phosphate (G1P). This reaction is the first ether-bond-formation step in the biosynthesis of archaeal membrane lipids. The chain is Geranylgeranylglyceryl phosphate synthase from Methanocaldococcus jannaschii (strain ATCC 43067 / DSM 2661 / JAL-1 / JCM 10045 / NBRC 100440) (Methanococcus jannaschii).